The chain runs to 943 residues: Translation initiation factor IF-2 (943 aa).

The span at 99–113 (VKAAQTQAAPVQPEQ) shows a compositional bias: low complexity. The tract at residues 99-354 (VKAAQTQAAP…LEPNQHAFQA (256 aa)) is disordered. The segment covering 117-141 (DAVKARAEAAARAEARAKAEAEAAK) has biased composition (basic and acidic residues). Residues 145–172 (AKAGNKAKPAAQKPTEAKAETAPVAAET) show a composition bias toward low complexity. Basic and acidic residues predominate over residues 173-197 (KPAEPKEKAVKPKHERNGKGKDAKK). The span at 200–215 (KPAAPAVPQPVVSAEE) shows a compositional bias: low complexity. Basic and acidic residues predominate over residues 216–250 (QAQRDEEARRAAALRAHQEALLKEKQERQARREAM). A compositionally biased stretch (low complexity) spans 251 to 264 (KQQAEQQAKAAQEA). 2 stretches are compositionally biased toward basic and acidic residues: residues 295 to 308 (AKKE…DEGQ) and 319 to 335 (GGRD…ERVR). In terms of domain architecture, tr-type G spans 443-612 (PRPPVVTVMG…LLEAEVLELT (170 aa)). Positions 452–459 (GHVDHGKT) are G1. 452–459 (GHVDHGKT) contacts GTP. The tract at residues 477–481 (GITQH) is G2. Residues 498 to 501 (DTPG) form a G3 region. GTP is bound by residues 498–502 (DTPGH) and 552–555 (NKID). A G4 region spans residues 552–555 (NKID). A G5 region spans residues 588–590 (SAK).

Belongs to the TRAFAC class translation factor GTPase superfamily. Classic translation factor GTPase family. IF-2 subfamily.

The protein localises to the cytoplasm. Functionally, one of the essential components for the initiation of protein synthesis. Protects formylmethionyl-tRNA from spontaneous hydrolysis and promotes its binding to the 30S ribosomal subunits. Also involved in the hydrolysis of GTP during the formation of the 70S ribosomal complex. In Neisseria gonorrhoeae (strain NCCP11945), this protein is Translation initiation factor IF-2.